A 166-amino-acid polypeptide reads, in one-letter code: Protein SprT (166 aa).

The SprT-like domain occupies Ala-21–Phe-160. His-74 contributes to the Zn(2+) binding site. Residue Glu-75 is part of the active site. His-78 is a binding site for Zn(2+).

This sequence belongs to the SprT family. The cofactor is Zn(2+).

Its subcellular location is the cytoplasm. The protein is Protein SprT of Vibrio atlanticus (strain LGP32) (Vibrio splendidus (strain Mel32)).